We begin with the raw amino-acid sequence, 174 residues long: Secretory-abundant heat soluble protein 2 (174 aa).

Positions 1–19 (MHRFVLALVVFAGAAIVWA) are cleaved as a signal peptide. An SAHS-c1 region spans residues 30–60 (EWTGKPWMGKWESDPSKDENVEEFKKKLQLP). Positions 77–105 (YKKGDEYHHKIIINDAHYKNDIVFKLGQE) are SAHS-c2. Residue Asn111 is glycosylated (N-linked (GlcNAc...) asparagine). Positions 118 to 172 (KYEDKDGALVGSVHYTGTKEQSLDKTINNVFKLEGDHLVKTSTIEGVTMKRHYNK) are SAHS-c3.

The protein belongs to the Secretory-abundant heat soluble protein (SAHS) family.

Its subcellular location is the secreted. Secreted heat soluble protein acting as a molecular shield in water-deficient condition. Tardigrade-specific intrinsically disordered proteins (TDPs) are essential for desiccation tolerance by forming non-crystalline amorphous solids upon desiccation, and this vitrified state mirrors their protective capabilities. This chain is Secretory-abundant heat soluble protein 2, found in Ramazzottius varieornatus (Water bear).